The chain runs to 946 residues: ATP-dependent 6-phosphofructokinase subunit beta (946 aa).

Residues 1-559 (MISIVNGTST…HLANFMAMNT (559 aa)) are N-terminal catalytic PFK domain 1. ATP contacts are provided by residues G192, 256–257 (RC), and 286–289 (GDGS). D287 contributes to the Mg(2+) binding site. Residues 332 to 334 (SID), R369, 376 to 378 (MGR), E433, R461, and 467 to 470 (HVQR) each bind beta-D-fructose 6-phosphate. D334 acts as the Proton acceptor in catalysis. Positions 560–573 (ANHEKPTLPREKRK) are interdomain linker. The C-terminal regulatory PFK domain 2 stretch occupies residues 574 to 946 (KIAIINIGAP…LVGRTRLDKP (373 aa)). Beta-D-fructose 2,6-bisphosphate is bound by residues R644, 702-706 (TISNN), 747-749 (QGG), K833, 839-842 (HVQQ), and R920.

Belongs to the phosphofructokinase type A (PFKA) family. ATP-dependent PFK group I subfamily. Eukaryotic two domain clade 'E' sub-subfamily. In terms of assembly, heterooctamer of 4 alpha and 4 beta chains. Requires Mg(2+) as cofactor.

It is found in the cytoplasm. The enzyme catalyses beta-D-fructose 6-phosphate + ATP = beta-D-fructose 1,6-bisphosphate + ADP + H(+). Its pathway is carbohydrate degradation; glycolysis; D-glyceraldehyde 3-phosphate and glycerone phosphate from D-glucose: step 3/4. Its activity is regulated as follows. Allosterically activated by ADP, AMP, or fructose 2,6-bisphosphate, and allosterically inhibited by ATP or citrate. In terms of biological role, catalyzes the phosphorylation of D-fructose 6-phosphate to fructose 1,6-bisphosphate by ATP, the first committing step of glycolysis. The protein is ATP-dependent 6-phosphofructokinase subunit beta (PFK2) of Candida albicans (Yeast).